The primary structure comprises 446 residues: UDP-N-acetylglucosamine--dolichyl-phosphate N-acetylglucosaminephosphotransferase (446 aa).

2 helical membrane-spanning segments follow: residues 1-21 (MIES…LMNQ) and 25-45 (PLLS…MFIP). UDP-N-acetyl-alpha-D-glucosamine contacts are provided by residues 59 to 61 (KDM) and E71. Helical transmembrane passes span 73–93 (MGAV…PVLF) and 123–143 (LLGA…LGIL). Residue K154 participates in dolichyl phosphate binding. The next 2 membrane-spanning stretches (helical) occupy residues 155–175 (FFLP…DYGV) and 191–211 (SLIN…IFCP). 208–216 (IFCPNSINI) contacts dolichyl phosphate. A Mg(2+)-binding site is contributed by N215. A run of 4 helical transmembrane segments spans residues 216 to 236 (IIAG…LVIA), 254 to 274 (AHLL…GLLK), 282 to 302 (VFVG…VGIL), and 311 to 331 (LFFI…FGLV). N221 provides a ligand contact to UDP-N-acetyl-alpha-D-glucosamine. D286 contacts Mg(2+). Residue 335 to 337 (RHR) participates in UDP-N-acetyl-alpha-D-glucosamine binding. N395 is a glycosylation site (N-linked (GlcNAc...) asparagine). Residues 412-432 (DHLTICIMGLQLLTGIFGLII) traverse the membrane as a helical segment.

It belongs to the glycosyltransferase 4 family. Mg(2+) is required as a cofactor.

The protein resides in the endoplasmic reticulum membrane. It carries out the reaction a di-trans,poly-cis-dolichyl phosphate + UDP-N-acetyl-alpha-D-glucosamine = an N-acetyl-alpha-D-glucosaminyl-diphospho-di-trans,poly-cis-dolichol + UMP. Its pathway is protein modification; protein glycosylation. Inhibited by natural nucleoside antibiotic tunicamycin, which acts as a structural analog and competitor of UDP-GlcNAc. UDP-N-acetylglucosamine--dolichyl-phosphate N-acetylglucosaminephosphotransferase that operates in the biosynthetic pathway of dolichol-linked oligosaccharides, the glycan precursors employed in protein asparagine (N)-glycosylation. The assembly of dolichol-linked oligosaccharides begins on the cytosolic side of the endoplasmic reticulum membrane and finishes in its lumen. The sequential addition of sugars to dolichol pyrophosphate produces dolichol-linked oligosaccharides containing fourteen sugars, including two GlcNAcs, nine mannoses and three glucoses. Once assembled, the oligosaccharide is transferred from the lipid to nascent proteins by oligosaccharyltransferases. Catalyzes the initial step of dolichol-linked oligosaccharide biosynthesis, transfering GlcNAc-1-P from cytosolic UDP-GlcNAc onto the carrier lipid dolichyl phosphate (P-dolichol), yielding GlcNAc-P-P-dolichol embedded in the cytoplasmic leaflet of the endoplasmic reticulum membrane. The protein is UDP-N-acetylglucosamine--dolichyl-phosphate N-acetylglucosaminephosphotransferase (gpt2) of Schizosaccharomyces pombe (strain 972 / ATCC 24843) (Fission yeast).